The primary structure comprises 161 residues: Nucleotide-binding protein mma_0840 (161 aa).

Belongs to the YajQ family.

In terms of biological role, nucleotide-binding protein. The polypeptide is Nucleotide-binding protein mma_0840 (Janthinobacterium sp. (strain Marseille) (Minibacterium massiliensis)).